A 424-amino-acid chain; its full sequence is Circumsporozoite protein (424 aa).

The first 18 residues, 1 to 18, serve as a signal peptide directing secretion; the sequence is MMRKLAILSVSSFLFVEA. The segment at 69 to 339 is disordered; it reads SRSLGENDDG…VKNNNNEEPS (271 aa). Basic and acidic residues predominate over residues 85-106; it reads NNREGKDEDKRDGNNEDNETLR. Residues 104 to 111 are required for the binding to heparan sulfate proteoglycans (HSPGs) on the surface of host hepatocytes; it reads TLRKPKHK. Residues 112–116 are region I; contains the proteolytic cleavage site; sequence KLKQP. The segment covering 120–300 has biased composition (low complexity); sequence NPDPNANPNV…PNANPNANPN (181 aa). A run of 44 repeats spans residues 123–126, 127–130, 131–134, 135–138, 139–142, 143–146, 147–150, 151–154, 155–158, 159–162, 163–166, 167–170, 171–174, 175–178, 179–182, 183–186, 187–190, 191–194, 195–198, 199–202, 203–206, 207–210, 211–214, 215–218, 219–222, 223–226, 227–230, 231–234, 235–238, 239–242, 243–246, 247–250, 251–254, 255–258, 259–262, 263–266, 267–270, 271–274, 275–278, 279–282, 283–286, 287–290, 291–294, and 295–298. The segment at 123 to 298 is 44 X 4 AA tandem repeats of P-N-[AV]-[ND]; sequence PNANPNVDPN…ANPNANPNAN (176 aa). The segment covering 301 to 316 has biased composition (polar residues); it reads KNNQGNGQGHNMPNDP. Residues 322–336 show a composition bias toward low complexity; sequence ENANANNAVKNNNNE. The TSP type-1 domain occupies 349–402; it reads KIQNSLSTEWSPCSVTCGNGIQVRIKPGSANKPKDELDYENDIEKKICKMEKCS. 2 disulfide bridges follow: C361–C396 and C365–C401. T364 carries an O-linked (Fuc) threonine glycan. C401 is lipidated: GPI-anchor amidated cysteine. The propeptide at 402-424 is removed in mature form; sequence SSVFNVVNSSIGLIMVLSFLFLN.

The protein belongs to the plasmodium circumsporozoite protein family. In terms of processing, during host cell invasion, proteolytically cleaved at the cell membrane in the region I by a papain-like cysteine protease of parasite origin. Cleavage is triggered by the sporozoite contact with highly sulfated heparan sulfate proteoglycans (HSPGs) present on the host hepatocyte cell surface. Cleavage exposes the TSP type-1 (TSR) domain and is required for productive invasion of host hepatocytes but not for adhesion to the host cell membrane. Cleavage is dispensable for sporozoite development in the oocyst, motility and for traversal of host and vector cells. Post-translationally, O-glycosylated; maybe by POFUT2.

The protein localises to the cell membrane. It is found in the cytoplasm. Its function is as follows. Essential sporozoite protein. In the mosquito vector, required for sporozoite development in the oocyst, migration through the vector hemolymph and entry into the vector salivary glands. In the vertebrate host, required for sporozoite migration through the host dermis and infection of host hepatocytes. Binds to highly sulfated heparan sulfate proteoglycans (HSPGs) on the surface of host hepatocytes. In the vertebrate host, binds to highly sulfated heparan sulfate proteoglycans (HSPGs) on the surface of host hepatocytes and is required for sporozoite invasion of the host hepatocytes. The polypeptide is Circumsporozoite protein (Plasmodium falciparum (isolate t4 / Thailand)).